The chain runs to 309 residues: Homoserine O-succinyltransferase (309 aa).

Cys142 functions as the Acyl-thioester intermediate in the catalytic mechanism. 2 residues coordinate substrate: Lys163 and Ser192. His235 acts as the Proton acceptor in catalysis. Glu237 is an active-site residue. Arg249 provides a ligand contact to substrate.

The protein belongs to the MetA family.

It is found in the cytoplasm. It catalyses the reaction L-homoserine + succinyl-CoA = O-succinyl-L-homoserine + CoA. It functions in the pathway amino-acid biosynthesis; L-methionine biosynthesis via de novo pathway; O-succinyl-L-homoserine from L-homoserine: step 1/1. Functionally, transfers a succinyl group from succinyl-CoA to L-homoserine, forming succinyl-L-homoserine. The protein is Homoserine O-succinyltransferase of Citrobacter koseri (strain ATCC BAA-895 / CDC 4225-83 / SGSC4696).